Reading from the N-terminus, the 306-residue chain is tRNA dimethylallyltransferase (306 aa).

2 to 9 (GPTASGKT) is a binding site for ATP. 4 to 9 (TASGKT) is a substrate binding site. Interaction with substrate tRNA regions lie at residues 27–30 (DSVQ) and 152–156 (QRIVR).

The protein belongs to the IPP transferase family. In terms of assembly, monomer. It depends on Mg(2+) as a cofactor.

The catalysed reaction is adenosine(37) in tRNA + dimethylallyl diphosphate = N(6)-dimethylallyladenosine(37) in tRNA + diphosphate. Its function is as follows. Catalyzes the transfer of a dimethylallyl group onto the adenine at position 37 in tRNAs that read codons beginning with uridine, leading to the formation of N6-(dimethylallyl)adenosine (i(6)A). This is tRNA dimethylallyltransferase from Magnetococcus marinus (strain ATCC BAA-1437 / JCM 17883 / MC-1).